The primary structure comprises 261 residues: Cytochrome c oxidase subunit 3 (261 aa).

The Mitochondrial matrix segment spans residues 1–15 (MTHQTHAYHMVNPSP). The helical transmembrane segment at 16 to 34 (WPLTGALSALLLTSGLMMW) threads the bilayer. Residues 35 to 40 (FHFNNP) are Mitochondrial intermembrane-facing. The chain crosses the membrane as a helical span at residues 41–66 (TLLVLGLLTNLISSYQWWRDIVREGT). Over 67 to 72 (YQGHHT) the chain is Mitochondrial matrix. A helical transmembrane segment spans residues 73-105 (KVVQKGLRYGMVLFIISEVFFFLGFFWAFYHSS). At 106–128 (LAPTPELGGCWPPTGISPLNPLE) the chain is on the mitochondrial intermembrane side. A helical transmembrane segment spans residues 129–152 (VPLLNTSILLASGVSITWSHHSLM). Topologically, residues 153–155 (EGN) are mitochondrial matrix. Residues 156–183 (RKQMIQALMITIALGLYFTALQAMEYYE) form a helical membrane-spanning segment. The Mitochondrial intermembrane segment spans residues 184-190 (SSFTISD). The chain crosses the membrane as a helical span at residues 191–223 (GVYGSTFFVATGFHGLHVIIGTTFLITCLLRQL). Over 224 to 232 (LYHFTSNHH) the chain is Mitochondrial matrix. The helical transmembrane segment at 233-256 (FGFEAAAWYWHFVDVVWLFLYVSI) threads the bilayer. The Mitochondrial intermembrane portion of the chain corresponds to 257–261 (YWWGS).

The protein belongs to the cytochrome c oxidase subunit 3 family. Component of the cytochrome c oxidase (complex IV, CIV), a multisubunit enzyme composed of 14 subunits. The complex is composed of a catalytic core of 3 subunits MT-CO1, MT-CO2 and MT-CO3, encoded in the mitochondrial DNA, and 11 supernumerary subunits COX4I, COX5A, COX5B, COX6A, COX6B, COX6C, COX7A, COX7B, COX7C, COX8 and NDUFA4, which are encoded in the nuclear genome. The complex exists as a monomer or a dimer and forms supercomplexes (SCs) in the inner mitochondrial membrane with NADH-ubiquinone oxidoreductase (complex I, CI) and ubiquinol-cytochrome c oxidoreductase (cytochrome b-c1 complex, complex III, CIII), resulting in different assemblies (supercomplex SCI(1)III(2)IV(1) and megacomplex MCI(2)III(2)IV(2)).

The protein localises to the mitochondrion inner membrane. The catalysed reaction is 4 Fe(II)-[cytochrome c] + O2 + 8 H(+)(in) = 4 Fe(III)-[cytochrome c] + 2 H2O + 4 H(+)(out). Functionally, component of the cytochrome c oxidase, the last enzyme in the mitochondrial electron transport chain which drives oxidative phosphorylation. The respiratory chain contains 3 multisubunit complexes succinate dehydrogenase (complex II, CII), ubiquinol-cytochrome c oxidoreductase (cytochrome b-c1 complex, complex III, CIII) and cytochrome c oxidase (complex IV, CIV), that cooperate to transfer electrons derived from NADH and succinate to molecular oxygen, creating an electrochemical gradient over the inner membrane that drives transmembrane transport and the ATP synthase. Cytochrome c oxidase is the component of the respiratory chain that catalyzes the reduction of oxygen to water. Electrons originating from reduced cytochrome c in the intermembrane space (IMS) are transferred via the dinuclear copper A center (CU(A)) of subunit 2 and heme A of subunit 1 to the active site in subunit 1, a binuclear center (BNC) formed by heme A3 and copper B (CU(B)). The BNC reduces molecular oxygen to 2 water molecules using 4 electrons from cytochrome c in the IMS and 4 protons from the mitochondrial matrix. The protein is Cytochrome c oxidase subunit 3 (MT-CO3) of Tachyglossus aculeatus aculeatus (Southeast Australian short-beaked echidna).